We begin with the raw amino-acid sequence, 541 residues long: Putative asparagine synthetase [glutamine-hydrolyzing] 1 (541 aa).

Cysteine 2 functions as the For GATase activity in the catalytic mechanism. In terms of domain architecture, Glutamine amidotransferase type-2 spans 2-213; it reads CSISGIIVKD…PNSQLIYYLD (212 aa). Residues 68-72, 92-94, and aspartate 116 contribute to the L-glutamine site; these read RLAIV and NGE. Residues valine 289 and 363 to 364 each bind ATP; that span reads SG.

This sequence belongs to the asparagine synthetase family.

The catalysed reaction is L-aspartate + L-glutamine + ATP + H2O = L-asparagine + L-glutamate + AMP + diphosphate + H(+). Its pathway is amino-acid biosynthesis; L-asparagine biosynthesis; L-asparagine from L-aspartate (L-Gln route): step 1/1. The chain is Putative asparagine synthetase [glutamine-hydrolyzing] 1 from Methanocaldococcus jannaschii (strain ATCC 43067 / DSM 2661 / JAL-1 / JCM 10045 / NBRC 100440) (Methanococcus jannaschii).